The sequence spans 796 residues: Probable coatomer subunit beta' (796 aa).

WD repeat units follow at residues 4–42 (LDFQRKLLSHTERVKAVDFHPTEPWVIASHYNGQVGIWN), 46–84 (QTLVRSFDINDVPIRACAFIARKNWFVCGSDDFQVRVYN), 88–126 (GEKVTQFEAHPDYIRALVVHPTQPFLLTSSDDMTIKCFN), 131–170 (WKCVQTFEGHSRYVMSLAINPKDTNTFASSCLDGTVKVWS), 172–214 (GSSV…KVWD), and 218–256 (KACVRILEGHTNNVSFAFFHSKFPIIISGSEDGTVKIWH).

This sequence belongs to the WD repeat COPB2 family. In terms of assembly, oligomeric complex that consists of at least the alpha, beta, beta', gamma, delta, epsilon and zeta subunits.

Its subcellular location is the cytoplasm. The protein resides in the golgi apparatus membrane. It localises to the cytoplasmic vesicle. The protein localises to the COPI-coated vesicle membrane. Its function is as follows. The coatomer is a cytosolic protein complex that binds to dilysine motifs and reversibly associates with Golgi non-clathrin-coated vesicles, which further mediate biosynthetic protein transport from the ER, via the Golgi up to the trans Golgi network. Coatomer complex is required for budding from Golgi membranes, and is essential for the retrograde Golgi-to-ER transport of dilysine-tagged proteins. The protein is Probable coatomer subunit beta' (sec27) of Schizosaccharomyces pombe (strain 972 / ATCC 24843) (Fission yeast).